Consider the following 529-residue polypeptide: Probable bifunctional tRNA threonylcarbamoyladenosine biosynthesis protein (529 aa).

The segment at 1 to 324 is kae1; sequence MIVLGLEGTA…FRIDEVDAPW (324 aa). Positions 107, 111, and 128 each coordinate Fe cation. Residues 128–132, aspartate 160, glycine 173, glutamate 177, and asparagine 257 each bind L-threonylcarbamoyladenylate; that span reads YVSGG. Residue aspartate 285 participates in Fe cation binding. In terms of domain architecture, Protein kinase spans 329–529; it reads SRKDYGKAGA…SAIRRRHRYV (201 aa). Residues 335–342 and lysine 355 each bind ATP; that span reads KAGAESRI. Aspartate 447 serves as the catalytic Proton acceptor; for kinase activity.

This sequence in the N-terminal section; belongs to the KAE1 / TsaD family. In the C-terminal section; belongs to the protein kinase superfamily. Tyr protein kinase family. BUD32 subfamily. As to quaternary structure, component of the KEOPS complex that consists of Kae1, Bud32, Cgi121 and Pcc1; the whole complex dimerizes. Fe(2+) serves as cofactor.

The protein localises to the cytoplasm. It carries out the reaction L-seryl-[protein] + ATP = O-phospho-L-seryl-[protein] + ADP + H(+). The catalysed reaction is L-threonyl-[protein] + ATP = O-phospho-L-threonyl-[protein] + ADP + H(+). The enzyme catalyses L-threonylcarbamoyladenylate + adenosine(37) in tRNA = N(6)-L-threonylcarbamoyladenosine(37) in tRNA + AMP + H(+). Required for the formation of a threonylcarbamoyl group on adenosine at position 37 (t(6)A37) in tRNAs that read codons beginning with adenine. Is a component of the KEOPS complex that is probably involved in the transfer of the threonylcarbamoyl moiety of threonylcarbamoyl-AMP (TC-AMP) to the N6 group of A37. The Kae1 domain likely plays a direct catalytic role in this reaction. The Bud32 domain probably displays kinase activity that regulates Kae1 function. The sequence is that of Probable bifunctional tRNA threonylcarbamoyladenosine biosynthesis protein from Thermoplasma acidophilum (strain ATCC 25905 / DSM 1728 / JCM 9062 / NBRC 15155 / AMRC-C165).